We begin with the raw amino-acid sequence, 62 residues long: Photosystem II reaction center protein Z (62 aa).

2 helical membrane passes run 8–28 and 41–61; these read TMFA…ITFA and FSGV…NSFI.

The protein belongs to the PsbZ family. As to quaternary structure, PSII is composed of 1 copy each of membrane proteins PsbA, PsbB, PsbC, PsbD, PsbE, PsbF, PsbH, PsbI, PsbJ, PsbK, PsbL, PsbM, PsbT, PsbY, PsbZ, Psb30/Ycf12, at least 3 peripheral proteins of the oxygen-evolving complex and a large number of cofactors. It forms dimeric complexes.

The protein resides in the plastid. It localises to the chloroplast thylakoid membrane. Functionally, may control the interaction of photosystem II (PSII) cores with the light-harvesting antenna, regulates electron flow through the 2 photosystem reaction centers. PSII is a light-driven water plastoquinone oxidoreductase, using light energy to abstract electrons from H(2)O, generating a proton gradient subsequently used for ATP formation. This chain is Photosystem II reaction center protein Z, found in Welwitschia mirabilis (Tree tumbo).